Reading from the N-terminus, the 784-residue chain is Toll-like receptor 2 (784 aa).

Positions Met-1 to Gly-20 are cleaved as a signal peptide. Over Ala-21–Arg-587 the chain is Extracellular. Cys-30 and Cys-36 are disulfide-bonded. LRR repeat units lie at residues Val-54–Asn-77, Leu-78–Asn-101, Leu-102–Val-125, Leu-126–Asn-150, Leu-151–Phe-175, Leu-176–Asn-199, Ile-200–Ser-223, Leu-224–Ser-250, Val-251–Gly-278, Ile-279–Asn-308, Val-309–Lys-337, Val-338–Ser-361, Leu-362–Val-388, Leu-389–Asn-414, Leu-415–Lys-437, Met-438–Gln-457, Thr-458–Gln-478, Leu-479–Val-500, and Leu-501–Gln-524. Asn-114 carries an N-linked (GlcNAc...) asparagine glycan. Asn-199 is a glycosylation site (N-linked (GlcNAc...) asparagine). Asn-248 carries N-linked (GlcNAc...) asparagine glycosylation. Cys-353 and Cys-382 are joined by a disulfide. Cys-432 and Cys-454 are joined by a disulfide. N-linked (GlcNAc...) asparagine glycosylation occurs at Asn-442. Residues Leu-525 to Arg-579 enclose the LRRCT domain. The chain crosses the membrane as a helical span at residues Ala-588 to Leu-608. The Cytoplasmic portion of the chain corresponds to Cys-609–Ser-784. The 144-residue stretch at Leu-639–Ile-782 folds into the TIR domain. Residue Lys-754 forms a Glycyl lysine isopeptide (Lys-Gly) (interchain with G-Cter in ubiquitin) linkage. The ATG16L1-binding motif signature appears at Tyr-761–Leu-778.

Belongs to the Toll-like receptor family. Interacts with LY96, TLR1 and TLR6 (via extracellular domain). TLR2 seems to exist in heterodimers with either TLR1 or TLR6 before stimulation by the ligand. The heterodimers form bigger oligomers in response to their corresponding ligands as well as further heterotypic associations with other receptors such as CD14 and/or CD36. Binds MYD88 (via TIR domain). Interacts with TICAM1. Interacts with CNPY3. Interacts with ATG16L1. Interacts with PPP1R11. Interacts with TICAM2. Interacts with TIRAP. Ubiquitinated at Lys-754 by PPP1R11, leading to its degradation. Deubiquitinated by USP2. Post-translationally, glycosylation of Asn-442 is critical for secretion of the N-terminal ectodomain of TLR2.

The protein resides in the membrane. The protein localises to the cytoplasmic vesicle. It localises to the phagosome membrane. It is found in the membrane raft. Its function is as follows. Cooperates with LY96 to mediate the innate immune response to bacterial lipoproteins and other microbial cell wall components. Cooperates with TLR1 or TLR6 to mediate the innate immune response to bacterial lipoproteins or lipopeptides. Acts via MYD88 and TRAF6, leading to NF-kappa-B activation, cytokine secretion and the inflammatory response. May also promote apoptosis in response to lipoproteins. Forms activation clusters composed of several receptors depending on the ligand, these clusters trigger signaling from the cell surface and subsequently are targeted to the Golgi in a lipid-raft dependent pathway. Forms the cluster TLR2:TLR6:CD14:CD36 in response to diacylated lipopeptides and TLR2:TLR1:CD14 in response to triacylated lipopeptides. The sequence is that of Toll-like receptor 2 (TLR2) from Ovis aries (Sheep).